Consider the following 128-residue polypeptide: Small ribosomal subunit protein bS6 (128 aa).

Positions 97 to 128 (TTPSPMMKEEKSRSLTAAPATDEAKPAEAESA) are disordered. Over residues 118–128 (DEAKPAEAESA) the composition is skewed to basic and acidic residues.

The protein belongs to the bacterial ribosomal protein bS6 family.

In terms of biological role, binds together with bS18 to 16S ribosomal RNA. This is Small ribosomal subunit protein bS6 from Aromatoleum aromaticum (strain DSM 19018 / LMG 30748 / EbN1) (Azoarcus sp. (strain EbN1)).